The following is a 727-amino-acid chain: NADH-ubiquinone oxidoreductase 75 kDa subunit, mitochondrial (727 aa).

Residues 1-23 constitute a mitochondrion transit peptide; sequence MLRIPVRKALVGLSKSPKGCVRT. Residues 30–108 enclose the 2Fe-2S ferredoxin-type domain; it reads NLIEVFVDGQ…GWNILTNSEK (79 aa). [2Fe-2S] cluster contacts are provided by C64, C75, and C78. N6-acetyllysine is present on K84. Position 92 (C92) interacts with [2Fe-2S] cluster. In terms of domain architecture, 4Fe-4S His(Cys)3-ligated-type spans 108–147; that stretch reads KSKKAREGVMEFLLANHPLDCPICDQGGECDLQDQSMMFG. Residues H124, C128, C131, C137, C176, C179, C182, and C226 each coordinate [4Fe-4S] cluster. A 4Fe-4S Mo/W bis-MGD-type domain is found at 245 to 301; the sequence is TRKTESIDVMDAVGSNIVVSTRTGEVMRILPRMHEDINEEWISDKTRFAYDGLKRQR. An N6-acetyllysine mark is found at K467, K499, and K709.

The protein belongs to the complex I 75 kDa subunit family. Core subunit of respiratory chain NADH dehydrogenase (Complex I) which is composed of 45 different subunits. This is the largest subunit of complex I and it is a component of the iron-sulfur (IP) fragment of the enzyme. Complex I associates with ubiquinol-cytochrome reductase complex (Complex III) to form supercomplexes. Interacts with MDM2 and AKAP1. Requires [2Fe-2S] cluster as cofactor. It depends on [4Fe-4S] cluster as a cofactor.

The protein localises to the mitochondrion inner membrane. The catalysed reaction is a ubiquinone + NADH + 5 H(+)(in) = a ubiquinol + NAD(+) + 4 H(+)(out). Its function is as follows. Core subunit of the mitochondrial membrane respiratory chain NADH dehydrogenase (Complex I) which catalyzes electron transfer from NADH through the respiratory chain, using ubiquinone as an electron acceptor. Essential for catalysing the entry and efficient transfer of electrons within complex I. Plays a key role in the assembly and stability of complex I and participates in the association of complex I with ubiquinol-cytochrome reductase complex (Complex III) to form supercomplexes. This chain is NADH-ubiquinone oxidoreductase 75 kDa subunit, mitochondrial (NDUFS1), found in Macaca fascicularis (Crab-eating macaque).